A 329-amino-acid polypeptide reads, in one-letter code: uncharacterized protein (329 aa).

The SIS domain occupies 38-184 (IVKLILKSQE…MACLMRAKNF (147 aa)). 56–61 (GVGKSA) contacts ATP. CBS domains lie at 211-267 (QTTN…GLSL) and 276-329 (TLKP…GLKA).

The protein belongs to the SIS family. GutQ/KpsF subfamily.

This is an uncharacterized protein from Helicobacter pylori (strain J99 / ATCC 700824) (Campylobacter pylori J99).